We begin with the raw amino-acid sequence, 834 residues long: Glycerol-3-phosphate acyltransferase (834 aa).

The short motif at 309-314 is the HXXXXD motif element; sequence CHRSHI.

This sequence belongs to the GPAT/DAPAT family.

The protein resides in the cell inner membrane. It carries out the reaction sn-glycerol 3-phosphate + an acyl-CoA = a 1-acyl-sn-glycero-3-phosphate + CoA. It functions in the pathway phospholipid metabolism; CDP-diacylglycerol biosynthesis; CDP-diacylglycerol from sn-glycerol 3-phosphate: step 1/3. This chain is Glycerol-3-phosphate acyltransferase, found in Pseudomonas fluorescens (strain Pf0-1).